The following is a 785-amino-acid chain: Probable cationic amino acid transporter (785 aa).

Transmembrane regions (helical) follow at residues 58-78 (LVSL…SGLV), 83-103 (AGPG…LSGV), 119-141 (AYTY…NLIL), 187-207 (YPDI…ALGV), 216-236 (VLNV…LFFV), 251-271 (WSGV…FDII), 291-311 (ASLV…TLMV), 337-357 (IVAI…LFPM), 360-380 (VIYA…VSTY), 384-404 (PAVA…LVSL), 407-427 (LIEM…VCVL), 568-588 (CVVL…FGSG), 596-616 (WAVL…FIII), 628-648 (MAPC…YLML), and 655-675 (WIRF…YGMW). Residues 715–785 (DQGPFQNWGK…VDDDLDDPLE (71 aa)) are disordered. A compositionally biased stretch (low complexity) spans 727–740 (QQKQPQQEQSEPQS). Over residues 775–785 (VVDDDLDDPLE) the composition is skewed to acidic residues.

The protein belongs to the amino acid-polyamine-organocation (APC) superfamily.

The protein resides in the lysosome membrane. Its function is as follows. May be involved in arginine transport. This chain is Probable cationic amino acid transporter (slc7a14a), found in Danio rerio (Zebrafish).